Here is a 908-residue protein sequence, read N- to C-terminus: UPF0182 protein Csac_0864 (908 aa).

The next 7 membrane-spanning stretches (helical) occupy residues F22–L42, F62–V82, I98–A118, F166–Y186, H208–M228, Y253–I273, and S286–V306.

The protein belongs to the UPF0182 family.

Its subcellular location is the cell membrane. In Caldicellulosiruptor saccharolyticus (strain ATCC 43494 / DSM 8903 / Tp8T 6331), this protein is UPF0182 protein Csac_0864.